We begin with the raw amino-acid sequence, 365 residues long: Phospho-N-acetylmuramoyl-pentapeptide-transferase (365 aa).

10 helical membrane-spanning segments follow: residues 22-42 (YISVRIIMISITSLLITLALG), 74-94 (TMGGVLILSSVIISCLLWGDL), 95-115 (TSIYLWILILVVIFFGAIGFF), 133-153 (YKFALQSIFSIVLAIVLFYLL), 168-188 (SLYIPIGIVIFVVLAFFIING), 201-221 (GLAIVPVVLVAAGLGIYAYIE), 240-260 (LAEVAVFCAAVCGSGLAFLWF), 267-287 (VFMGDVGSLTLGAVLGVIAVM), 292-312 (LIFFIMGLLFVVEALSVMLQV), and 342-362 (KVVIRFWIISLILFLIGLAAI).

This sequence belongs to the glycosyltransferase 4 family. MraY subfamily. Mg(2+) is required as a cofactor.

It localises to the cell inner membrane. The catalysed reaction is UDP-N-acetyl-alpha-D-muramoyl-L-alanyl-gamma-D-glutamyl-meso-2,6-diaminopimeloyl-D-alanyl-D-alanine + di-trans,octa-cis-undecaprenyl phosphate = di-trans,octa-cis-undecaprenyl diphospho-N-acetyl-alpha-D-muramoyl-L-alanyl-D-glutamyl-meso-2,6-diaminopimeloyl-D-alanyl-D-alanine + UMP. Its pathway is cell wall biogenesis; peptidoglycan biosynthesis. In terms of biological role, catalyzes the initial step of the lipid cycle reactions in the biosynthesis of the cell wall peptidoglycan: transfers peptidoglycan precursor phospho-MurNAc-pentapeptide from UDP-MurNAc-pentapeptide onto the lipid carrier undecaprenyl phosphate, yielding undecaprenyl-pyrophosphoryl-MurNAc-pentapeptide, known as lipid I. This chain is Phospho-N-acetylmuramoyl-pentapeptide-transferase, found in Francisella tularensis subsp. tularensis (strain FSC 198).